Here is a 209-residue protein sequence, read N- to C-terminus: Large ribosomal subunit protein uL3 (209 aa).

N5-methylglutamine is present on Gln-150.

This sequence belongs to the universal ribosomal protein uL3 family. In terms of assembly, part of the 50S ribosomal subunit. Forms a cluster with proteins L14 and L19. Post-translationally, methylated by PrmB.

Its function is as follows. One of the primary rRNA binding proteins, it binds directly near the 3'-end of the 23S rRNA, where it nucleates assembly of the 50S subunit. The polypeptide is Large ribosomal subunit protein uL3 (Salmonella arizonae (strain ATCC BAA-731 / CDC346-86 / RSK2980)).